Consider the following 388-residue polypeptide: Processive diacylglycerol beta-glucosyltransferase (388 aa).

It belongs to the glycosyltransferase 28 family. UgtP subfamily.

It localises to the cell membrane. The catalysed reaction is a 1,2-diacyl-3-O-(beta-D-glucopyranosyl)-sn-glycerol + UDP-alpha-D-glucose = a 1,2-diacyl-3-O-(beta-D-Glc-(1-&gt;6)-beta-D-Glc)-sn-glycerol + UDP + H(+). It carries out the reaction a 1,2-diacyl-3-O-(beta-D-Glc-(1-&gt;6)-beta-D-Glc)-sn-glycerol + UDP-alpha-D-glucose = a 1,2-diacyl-3-O-(beta-D-Glc-(1-&gt;6)-beta-D-Glc-(1-&gt;6)-beta-D-Glc)-sn-glycerol + UDP + H(+). It catalyses the reaction a 1,2-diacyl-sn-glycerol + UDP-alpha-D-glucose = a 1,2-diacyl-3-O-(beta-D-glucopyranosyl)-sn-glycerol + UDP + H(+). Its pathway is glycolipid metabolism; diglucosyl-diacylglycerol biosynthesis. Processive glucosyltransferase involved in the biosynthesis of both the bilayer- and non-bilayer-forming membrane glucolipids. Is able to successively transfer up to three glucosyl residues to diacylglycerol (DAG), thereby catalyzing the formation of beta-monoglucosyl-DAG (3-O-(beta-D-glucopyranosyl)-1,2-diacyl-sn-glycerol), beta-diglucosyl-DAG (3-O-(beta-D-glucopyranosyl-beta-(1-&gt;6)-D-glucopyranosyl)-1,2-diacyl-sn-glycerol) and beta-triglucosyl-DAG (3-O-(beta-D-glucopyranosyl-beta-(1-&gt;6)-D-glucopyranosyl-beta-(1-&gt;6)-D-glucopyranosyl)-1,2-diacyl-sn-glycerol). Beta-diglucosyl-DAG is the predominant glycolipid found in Bacillales and is also used as a membrane anchor for lipoteichoic acid (LTA). The chain is Processive diacylglycerol beta-glucosyltransferase from Bacillus anthracis (strain A0248).